Consider the following 153-residue polypeptide: Probable histone H2A.2 (153 aa).

2 disordered regions span residues 1-24 (MDAS…KKSV) and 127-153 (KKTE…PKKA). Basic and acidic residues predominate over residues 127–141 (KKTERSNTVSKEPKS). A compositionally biased stretch (basic residues) spans 142–153 (PKPKAGKSPKKA). An SPKK motif motif is present at residues 149 to 152 (SPKK).

Belongs to the histone H2A family. As to quaternary structure, the nucleosome is a histone octamer containing two molecules each of H2A, H2B, H3 and H4 assembled in one H3-H4 heterotetramer and two H2A-H2B heterodimers. The octamer wraps approximately 147 bp of DNA.

Its subcellular location is the nucleus. The protein localises to the chromosome. In terms of biological role, core component of nucleosome. Nucleosomes wrap and compact DNA into chromatin, limiting DNA accessibility to the cellular machineries which require DNA as a template. Histones thereby play a central role in transcription regulation, DNA repair, DNA replication and chromosomal stability. DNA accessibility is regulated via a complex set of post-translational modifications of histones, also called histone code, and nucleosome remodeling. This is Probable histone H2A.2 from Medicago truncatula (Barrel medic).